Consider the following 206-residue polypeptide: 2,3-bisphosphoglycerate-dependent phosphoglycerate mutase (206 aa).

Residues 9-16 (RHGQSEWN), 22-23 (TG), R61, 88-91 (ERDY), K99, 115-116 (RR), and 159-160 (GN) each bind substrate. H10 functions as the Tele-phosphohistidine intermediate in the catalytic mechanism. E88 (proton donor/acceptor) is an active-site residue.

It belongs to the phosphoglycerate mutase family. BPG-dependent PGAM subfamily. Homodimer.

It catalyses the reaction (2R)-2-phosphoglycerate = (2R)-3-phosphoglycerate. It functions in the pathway carbohydrate degradation; glycolysis; pyruvate from D-glyceraldehyde 3-phosphate: step 3/5. Functionally, catalyzes the interconversion of 2-phosphoglycerate and 3-phosphoglycerate. In Mesorhizobium japonicum (strain LMG 29417 / CECT 9101 / MAFF 303099) (Mesorhizobium loti (strain MAFF 303099)), this protein is 2,3-bisphosphoglycerate-dependent phosphoglycerate mutase.